The sequence spans 415 residues: Corticotropin-releasing factor receptor 1 (415 aa).

Residues 1-23 form the signal peptide; the sequence is MGQRPQLRLVKALLLLGLNPVST. The Extracellular portion of the chain corresponds to 24 to 111; the sequence is SLQDQQCESL…CQEILNEEKK (88 aa). Intrachain disulfides connect Cys30-Cys54, Cys44-Cys87, and Cys68-Cys102. 5 N-linked (GlcNAc...) asparagine glycosylation sites follow: Asn38, Asn45, Asn78, Asn90, and Asn98. An important for peptide agonist binding region spans residues 99–108; the sequence is YSECQEILNE. The chain crosses the membrane as a helical span at residues 112–142; the sequence is SKVHYHIAVIINYLGHCISLVALLVAFVLFL. Residues 143 to 149 lie on the Cytoplasmic side of the membrane; the sequence is RLRSIRC. Residues 150-174 traverse the membrane as a helical segment; the sequence is LRNIIHWNLISAFILRNATWFVVQL. The Extracellular segment spans residues 175–189; it reads TVSPEVHQSNVAWCR. Cys188 and Cys258 are disulfide-bonded. The helical transmembrane segment at 190-218 threads the bilayer; the sequence is LVTAAYNYFHVTNFFWMFGEGCYLHTAIV. The Cytoplasmic portion of the chain corresponds to 219-225; the sequence is LTYSTDR. The helical transmembrane segment at 226-253 threads the bilayer; that stretch reads LRKWMFVCIGWGVPFPIIVAWAIGKLYY. Topologically, residues 254 to 269 are extracellular; it reads DNEKCWFGKRPGVYTD. Residues 270–295 form a helical membrane-spanning segment; it reads YIYQGPMILVLLINFIFLFNIVRILM. The segment at 280–290 is important for antagonist binding; that stretch reads LLINFIFLFNI. Topologically, residues 296–306 are cytoplasmic; it reads TKLRASTTSET. Ser301 is modified (phosphoserine; by PKA). A helical transmembrane segment spans residues 307-331; that stretch reads IQYRKAVKATLVLLPLLGITYMLFF. Topologically, residues 332-338 are extracellular; sequence VNPGEDE. A helical transmembrane segment spans residues 339–368; it reads VSRVVFIYFNSFLESFQGFFVSVFYCFLNS. At 369–415 the chain is on the cytoplasmic side; the sequence is EVRSAIRKRWRRWQDKHSIRARVARAMSIPTSPTRVSFHSIKQSTAV.

This sequence belongs to the G-protein coupled receptor 2 family. Heterodimer; heterodimerizes with GPER1. Interacts (via N-terminal extracellular domain) with CRH and UCN. Interacts with DLG1; this inhibits endocytosis of CRHR1 after agonist binding. Post-translationally, C-terminal Ser or Thr residues may be phosphorylated. In terms of processing, phosphorylation at Ser-301 by PKA prevents maximal coupling to Gq-protein, and thereby negatively regulates downstream signaling. In terms of tissue distribution, detected in brain cortex (at protein level).

The protein localises to the cell membrane. It is found in the endosome. In terms of biological role, G-protein coupled receptor for CRH (corticotropin-releasing factor) and UCN (urocortin). Has high affinity for CRH and UCN. Ligand binding causes a conformation change that triggers signaling via guanine nucleotide-binding proteins (G proteins) and down-stream effectors, such as adenylate cyclase. Promotes the activation of adenylate cyclase, leading to increased intracellular cAMP levels. Inhibits the activity of the calcium channel CACNA1H. Required for normal embryonic development of the adrenal gland and for normal hormonal responses to stress. Plays a role in the response to anxiogenic stimuli. In Mus musculus (Mouse), this protein is Corticotropin-releasing factor receptor 1 (Crhr1).